The following is a 510-amino-acid chain: 2,3-bisphosphoglycerate-independent phosphoglycerate mutase (510 aa).

Asp16 and Ser66 together coordinate Mn(2+). The Phosphoserine intermediate role is filled by Ser66. Substrate contacts are provided by residues His127, 156–157 (RD), Arg186, Arg192, 257–260 (RADR), and Lys333. Mn(2+) contacts are provided by Asp400, His404, Asp441, His442, and His460.

Belongs to the BPG-independent phosphoglycerate mutase family. Monomer. Requires Mn(2+) as cofactor.

The catalysed reaction is (2R)-2-phosphoglycerate = (2R)-3-phosphoglycerate. The protein operates within carbohydrate degradation; glycolysis; pyruvate from D-glyceraldehyde 3-phosphate: step 3/5. Functionally, catalyzes the interconversion of 2-phosphoglycerate and 3-phosphoglycerate. The sequence is that of 2,3-bisphosphoglycerate-independent phosphoglycerate mutase from Gluconobacter oxydans (strain 621H) (Gluconobacter suboxydans).